Here is a 393-residue protein sequence, read N- to C-terminus: NAD(P)H-quinone oxidoreductase subunit H, chloroplastic (393 aa).

Belongs to the complex I 49 kDa subunit family. NDH is composed of at least 16 different subunits, 5 of which are encoded in the nucleus.

The protein localises to the plastid. It is found in the chloroplast thylakoid membrane. It catalyses the reaction a plastoquinone + NADH + (n+1) H(+)(in) = a plastoquinol + NAD(+) + n H(+)(out). The catalysed reaction is a plastoquinone + NADPH + (n+1) H(+)(in) = a plastoquinol + NADP(+) + n H(+)(out). In terms of biological role, NDH shuttles electrons from NAD(P)H:plastoquinone, via FMN and iron-sulfur (Fe-S) centers, to quinones in the photosynthetic chain and possibly in a chloroplast respiratory chain. The immediate electron acceptor for the enzyme in this species is believed to be plastoquinone. Couples the redox reaction to proton translocation, and thus conserves the redox energy in a proton gradient. The protein is NAD(P)H-quinone oxidoreductase subunit H, chloroplastic of Morus indica (Mulberry).